Consider the following 861-residue polypeptide: Leucine--tRNA ligase (861 aa).

The 'HIGH' region signature appears at Pro-42–His-52. Positions Lys-623 to Ser-627 match the 'KMSKS' region motif. Lys-626 serves as a coordination point for ATP.

Belongs to the class-I aminoacyl-tRNA synthetase family.

It is found in the cytoplasm. The catalysed reaction is tRNA(Leu) + L-leucine + ATP = L-leucyl-tRNA(Leu) + AMP + diphosphate. This is Leucine--tRNA ligase from Caulobacter vibrioides (strain ATCC 19089 / CIP 103742 / CB 15) (Caulobacter crescentus).